A 605-amino-acid polypeptide reads, in one-letter code: MQLQVMNSPFNQEQAELLNRLLPTLTESQKIWLSGYLSAQSVSAQEAAGTPAAAVSAEAPAPAVSKEVTVLYGSQTGNAQGLAENAGKQLEQSGFQVTVSSMSDFKPNQLKKVTNLLIVVSTHGEGEPPDNALSFHEFLHGRRAPKLEDLRFSVLALGDSSYEFFCQTGKEFDQRLEELGGKRISPRVDCDLDYDEPAAEWLEGVLKGLNEAGGGSAAPAPAAASQTGESSYSRTNPFRAEVLENLNLNGRGSNKETRHVELSLEGSGLTYEPGDSLGVYPENDPELVELLLKEMNWDPEEIVTLNKQGDVRPLKEALISHYEITVLTKPLLEQAAQLTGNDELRELLAPGNEENVKAYIEGRDLLDLVRDYGPFSVSAQEFVSILRKMPARLYSIASSLSANPDEVHLTIGAVRYDAHGRERKGVCSILCAERLQPGDTLPVYVQHNQNFKLPKDPETPIIMVGPGTGVAPFRSFMQEREETGAEGKAWMFFGDQHFVTDFLYQTEWQNWLKDGVLTKMDVAFSRDTEEKVYVQHRMLEHSAELFEWLQEGAAVYICGDEKHMAHDVHNTLLEIIEKEGNMSREEAEAYLADMQQQKRYQRDVY.

The 139-residue stretch at 68 to 206 (VTVLYGSQTG…PAAEWLEGVL (139 aa)) folds into the Flavodoxin-like domain. Residues 74 to 78 (SQTGN), 121 to 126 (STHGEG), and 154 to 185 (VLAL…KRIS) contribute to the FMN site. The tract at residues 213 to 234 (GGGSAAPAPAAASQTGESSYSR) is disordered. The FAD-binding FR-type domain occupies 235–454 (TNPFRAEVLE…VQHNQNFKLP (220 aa)). 392–395 (RLYS) contacts FAD. Residues Asp495 and 525–533 (SRDTEEKVY) contribute to the NADP(+) site.

Alpha(8)-beta(8). The alpha component is a flavoprotein, the beta component is a hemoprotein. FAD is required as a cofactor. FMN serves as cofactor.

The catalysed reaction is hydrogen sulfide + 3 NADP(+) + 3 H2O = sulfite + 3 NADPH + 4 H(+). Its pathway is sulfur metabolism; hydrogen sulfide biosynthesis; hydrogen sulfide from sulfite (NADPH route): step 1/1. Its function is as follows. Component of the sulfite reductase complex that catalyzes the 6-electron reduction of sulfite to sulfide. This is one of several activities required for the biosynthesis of L-cysteine from sulfate. The flavoprotein component catalyzes the electron flow from NADPH -&gt; FAD -&gt; FMN to the hemoprotein component. This is Sulfite reductase [NADPH] flavoprotein alpha-component (cysJ) from Bacillus subtilis (strain 168).